The sequence spans 782 residues: Protein phosphatase 1 regulatory subunit 12C (782 aa).

Residues 1–17 (MSGEDGPAAGPGAAAAA) show a composition bias toward low complexity. The tract at residues 1-43 (MSGEDGPAAGPGAAAAAARERRREQLRQWGARAGAEPGPGERR) is disordered. An N-acetylserine modification is found at serine 2. ANK repeat units follow at residues 100–129 (DGIS…TVNQ), 133–162 (EGWT…NIAA), 226–255 (TGAS…DPEL), and 259–288 (DGWT…GMDS). The stretch at 297–329 (CDLADEEVLSLLEELARKQEDLRNQKEASQSRG) forms a coiled coil. The interval 316 to 686 (EDLRNQKEAS…EEPDGGFRTL (371 aa)) is disordered. The span at 323 to 337 (EASQSRGQEPQAPSS) shows a compositional bias: polar residues. Positions 349 to 365 (SSREKISLQDLSKERRP) are enriched in basic and acidic residues. The span at 374 to 383 (QDEDEGEEGP) shows a compositional bias: acidic residues. Residues serine 399, serine 407, serine 427, serine 452, and serine 509 each carry the phosphoserine modification. Residues 449 to 463 (RSASSSWLEGTSTQA) are compositionally biased toward polar residues. Residues 537-546 (VRDEESESQR) are compositionally biased toward basic and acidic residues. Over residues 547–557 (KARSRLMRQSR) the composition is skewed to basic residues. Threonine 560 bears the Phosphothreonine; by CDC42BP and ROCK2 mark. Positions 567–583 (DLKEAEKAAGKAPESEK) are enriched in basic and acidic residues. A phosphoserine mark is found at serine 604 and serine 647. Residues 670 to 680 (PEPEPESEEPD) are compositionally biased toward acidic residues. Residues 681–782 (GGFRTLYAEL…LIRVISKLSK (102 aa)) adopt a coiled-coil conformation.

PP1 comprises a catalytic subunit, PPP1CA, PPP1CB or PPP1CC, and one or several targeting or regulatory subunits. PPP1R12C mediates binding to myosin. Interacts via its N-terminus with PPP1CB. Interacts with IL16. Interacts with the coiled-coil domain of MPRIP. Interacts with NOD2. In terms of processing, phosphorylation at Thr-560 is essential for its interaction with PPP1CB. In terms of tissue distribution, ubiquitously expressed. Highly expressed in heart.

Its subcellular location is the cytoplasm. It localises to the cytoskeleton. The protein resides in the stress fiber. Functionally, regulates myosin phosphatase activity. This Homo sapiens (Human) protein is Protein phosphatase 1 regulatory subunit 12C.